The primary structure comprises 200 residues: MSFSPLIRQLIDAFRVLPGVGQKTAQRMALQLLERDRSGGSRLALALGQAMDGVGHCRSCRTLTEEELCPQCADPRRDDTLLCVVEGPTDVYAVEQTGYRGRYFVLKGHLSPLDGLGPEAIGIPQLMERISQQGTFTEVILATNPTVEGEATAHYIAQLLHEKGLVASRIAHGVPLGGELDLVDGGTLAHSFAGRKPIAL.

The segment at 57–72 (CRSCRTLTEEELCPQC) adopts a C4-type zinc-finger fold. In terms of domain architecture, Toprim spans 80–175 (TLLCVVEGPT…VASRIAHGVP (96 aa)).

It belongs to the RecR family.

Functionally, may play a role in DNA repair. It seems to be involved in an RecBC-independent recombinational process of DNA repair. It may act with RecF and RecO. The chain is Recombination protein RecR from Pseudomonas savastanoi pv. phaseolicola (strain 1448A / Race 6) (Pseudomonas syringae pv. phaseolicola (strain 1448A / Race 6)).